A 352-amino-acid polypeptide reads, in one-letter code: DNA polymerase IV (352 aa).

One can recognise a UmuC domain in the interval I6–G187. Mg(2+) contacts are provided by D10 and D105. Residue E106 is part of the active site.

Belongs to the DNA polymerase type-Y family. Monomer. The cofactor is Mg(2+).

The protein localises to the cytoplasm. It catalyses the reaction DNA(n) + a 2'-deoxyribonucleoside 5'-triphosphate = DNA(n+1) + diphosphate. Poorly processive, error-prone DNA polymerase involved in untargeted mutagenesis. Copies undamaged DNA at stalled replication forks, which arise in vivo from mismatched or misaligned primer ends. These misaligned primers can be extended by PolIV. Exhibits no 3'-5' exonuclease (proofreading) activity. May be involved in translesional synthesis, in conjunction with the beta clamp from PolIII. This Marinomonas sp. (strain MWYL1) protein is DNA polymerase IV.